A 212-amino-acid chain; its full sequence is Peptide methionine sulfoxide reductase MsrA (212 aa).

Cys-52 is an active-site residue.

The protein belongs to the MsrA Met sulfoxide reductase family.

It catalyses the reaction L-methionyl-[protein] + [thioredoxin]-disulfide + H2O = L-methionyl-(S)-S-oxide-[protein] + [thioredoxin]-dithiol. The catalysed reaction is [thioredoxin]-disulfide + L-methionine + H2O = L-methionine (S)-S-oxide + [thioredoxin]-dithiol. In terms of biological role, has an important function as a repair enzyme for proteins that have been inactivated by oxidation. Catalyzes the reversible oxidation-reduction of methionine sulfoxide in proteins to methionine. This chain is Peptide methionine sulfoxide reductase MsrA, found in Escherichia coli (strain SMS-3-5 / SECEC).